Here is a 239-residue protein sequence, read N- to C-terminus: Ribonuclease PH (239 aa).

Residues Arg87 and 125 to 127 (GTR) contribute to the phosphate site.

It belongs to the RNase PH family. As to quaternary structure, homohexameric ring arranged as a trimer of dimers.

It catalyses the reaction tRNA(n+1) + phosphate = tRNA(n) + a ribonucleoside 5'-diphosphate. In terms of biological role, phosphorolytic 3'-5' exoribonuclease that plays an important role in tRNA 3'-end maturation. Removes nucleotide residues following the 3'-CCA terminus of tRNAs; can also add nucleotides to the ends of RNA molecules by using nucleoside diphosphates as substrates, but this may not be physiologically important. Probably plays a role in initiation of 16S rRNA degradation (leading to ribosome degradation) during starvation. This Ectopseudomonas mendocina (strain ymp) (Pseudomonas mendocina) protein is Ribonuclease PH.